The sequence spans 171 residues: MDFKQHITIVENFPKEGIRFKDITTLMQNGEVYKRAIDEMARFAKEKEVDLVVGPEARGFVVGCPIAYAIGKGFVPVRKAGKLPREVISVDYGLEYGKDRLTIHRDAIQKGQRVLIADDLLATGGTIEATVQMVEQLGGEVVGIAFMIELGYLNGRDKLVTYDVFSLTTYE.

Belongs to the purine/pyrimidine phosphoribosyltransferase family. Homodimer.

It is found in the cytoplasm. It carries out the reaction AMP + diphosphate = 5-phospho-alpha-D-ribose 1-diphosphate + adenine. It participates in purine metabolism; AMP biosynthesis via salvage pathway; AMP from adenine: step 1/1. In terms of biological role, catalyzes a salvage reaction resulting in the formation of AMP, that is energically less costly than de novo synthesis. This Halalkalibacterium halodurans (strain ATCC BAA-125 / DSM 18197 / FERM 7344 / JCM 9153 / C-125) (Bacillus halodurans) protein is Adenine phosphoribosyltransferase.